The following is a 1386-amino-acid chain: Lysophospholipase NTE1 (1386 aa).

Over 1-19 (MGPEFEDSIPLVHSDNRTT) the chain is Cytoplasmic. Residues 20-40 (TIYSVYIIISDIFSFVQWLLF) form a helical membrane-spanning segment. The Lumenal portion of the chain corresponds to 41–65 (KVLNLIIIDSPAFVLRLLSKNFEIN). The chain crosses the membrane as a helical span at residues 66–86 (LHLSSILATLIGVSVVTYLVI). Residues 87–1386 (RYKFLTGYSH…KKILYRRNSI (1300 aa)) are Cytoplasmic-facing. Residues 394-416 (EAEAENLPKKLKHHHRNQLQRTT) are disordered. Residues 402-411 (KKLKHHHRNQ) show a composition bias toward basic residues. Residues 577-701 (KRLL…LKNL) and 697-821 (KLKN…VASK) each bind a nucleoside 3',5'-cyclic phosphate. The PNPLA domain maps to 1081-1245 (LVLGGGGSRG…LDNLPVNEMK (165 aa)). The short motif at 1085–1090 (GGGSRG) is the GXGXXG element. A GXSXG motif is present at residues 1112-1116 (GTSIG). The Nucleophile role is filled by Ser1114. Asp1232 serves as the catalytic Proton acceptor. Positions 1232–1234 (DGG) match the DGA/G motif.

This sequence belongs to the NTE family.

The protein resides in the endoplasmic reticulum membrane. The enzyme catalyses a 1-acyl-sn-glycero-3-phosphocholine + H2O = sn-glycerol 3-phosphocholine + a fatty acid + H(+). With respect to regulation, inhibited by organophosphorus esters. Intracellular phospholipase B that catalyzes the double deacylation of phosphatidylcholine (PC) to glycerophosphocholine (GroPCho). Plays an important role in membrane lipid homeostasis. Responsible for the rapid PC turnover in response to inositol, elevated temperatures, or when choline is present in the growth medium. In Candida albicans (strain SC5314 / ATCC MYA-2876) (Yeast), this protein is Lysophospholipase NTE1 (NTE1).